Consider the following 389-residue polypeptide: Nicotinamide-nucleotide adenylyltransferase (389 aa).

Positions lysine 380 to lysine 383 match the Nuclear localization signal motif.

This sequence belongs to the eukaryotic NMN adenylyltransferase family. Abundantly expressed in neuronal and muscle cells. Present at relatively low levels at the neuromuscular junction. Expressed in the eye; present in photoreceptor cells and various neurons in the lamina cortex and medulla cortex and at low levels in the lamina.

The protein resides in the nucleus. The protein localises to the cytoplasm. Its subcellular location is the presynaptic active zone. The catalysed reaction is beta-nicotinamide D-ribonucleotide + ATP + H(+) = diphosphate + NAD(+). It catalyses the reaction nicotinate beta-D-ribonucleotide + ATP + H(+) = deamido-NAD(+) + diphosphate. The protein operates within cofactor biosynthesis; NAD(+) biosynthesis; NAD(+) from nicotinamide D-ribonucleotide: step 1/1. Its pathway is cofactor biosynthesis; NAD(+) biosynthesis; deamido-NAD(+) from nicotinate D-ribonucleotide: step 1/1. Its function is as follows. Catalyzes the formation of NAD(+) from nicotinamide mononucleotide (NMN) and ATP. Essential for viability. Stress-response chaperone protein that prevents toxic aggregation of proteins and promotes proteasome-mediated degradation of misfolded proteins; this is independent of its NAD(+) synthesis activity. Neuroprotective in response to toxic protein aggregation, for example by overexpressed Atx-1/ataxin-1. Required for maintenance and integrity of mature neurons, protecting them from neuronal activity-induced neurodegeneration. Required for the maintenance of axonal and dendritic integrity in both central and peripheral neurons. Chaperone function and neuroprotective roles are largely independent of NAD(+) synthesis activity. In terms of biological role, catalyzes the formation of NAD(+) from nicotinamide mononucleotide (NMN) and ATP. Has, or stimulates, chaperone holdase activity but not refoldase activity. Does not have neuroprotective properties and may stimulate apoptosis and neurodegeneration in response to toxic protein aggregates. Functionally, catalyzes the formation of NAD(+) from nicotinamide mononucleotide (NMN) and ATP. Has, or stimulates, chaperone holdase and refoldase activity. Neuroprotective and reduces the toxic load of protein aggregates, preventing apoptosis and neurodegeneration. Promotes clearance of nuclear misfolded protein aggregates. The chain is Nicotinamide-nucleotide adenylyltransferase from Drosophila melanogaster (Fruit fly).